Consider the following 163-residue polypeptide: Lipoprotein signal peptidase (163 aa).

Helical transmembrane passes span 9 to 29, 42 to 62, 67 to 87, and 93 to 113; these read AWPW…SKYL, ILPF…SFLG, WQII…ILWL, and SEIM…GNFI. Active-site residues include Asp-123 and Asp-141. Residues 137-157 traverse the membrane as a helical segment; sequence FNVADSAICVGVFLLIVHMLL.

The protein belongs to the peptidase A8 family.

It localises to the cell inner membrane. The catalysed reaction is Release of signal peptides from bacterial membrane prolipoproteins. Hydrolyzes -Xaa-Yaa-Zaa-|-(S,diacylglyceryl)Cys-, in which Xaa is hydrophobic (preferably Leu), and Yaa (Ala or Ser) and Zaa (Gly or Ala) have small, neutral side chains.. It participates in protein modification; lipoprotein biosynthesis (signal peptide cleavage). Its function is as follows. This protein specifically catalyzes the removal of signal peptides from prolipoproteins. This is Lipoprotein signal peptidase from Coxiella burnetii (strain RSA 493 / Nine Mile phase I).